A 313-amino-acid chain; its full sequence is Aspartate carbamoyltransferase catalytic subunit (313 aa).

Residues Arg66 and Thr67 each contribute to the carbamoyl phosphate site. Lys94 contributes to the L-aspartate binding site. Residues Arg116, His144, and Gln147 each contribute to the carbamoyl phosphate site. L-aspartate is bound by residues Arg177 and Arg231. Positions 272 and 273 each coordinate carbamoyl phosphate.

It belongs to the aspartate/ornithine carbamoyltransferase superfamily. ATCase family. Heterododecamer (2C3:3R2) of six catalytic PyrB chains organized as two trimers (C3), and six regulatory PyrI chains organized as three dimers (R2).

It catalyses the reaction carbamoyl phosphate + L-aspartate = N-carbamoyl-L-aspartate + phosphate + H(+). The protein operates within pyrimidine metabolism; UMP biosynthesis via de novo pathway; (S)-dihydroorotate from bicarbonate: step 2/3. In terms of biological role, catalyzes the condensation of carbamoyl phosphate and aspartate to form carbamoyl aspartate and inorganic phosphate, the committed step in the de novo pyrimidine nucleotide biosynthesis pathway. This is Aspartate carbamoyltransferase catalytic subunit from Pelagibacter ubique (strain HTCC1062).